The sequence spans 172 residues: MAMPRKLKLMNVFLNGYSYQGVAKSVTLPKLTRKLENYRGAGMNGSAPVDLGLDDDALSMEWSLGGFPDSVIWELYAATGVDAVPIRFAGSYQRDDTGETVAVEVVMRGRQKEIDTGEGKQGEDTESKISVVCTYFRLTMDGKELVEIDTINMIEKVNGVDRLEQHRRNIGL.

The protein belongs to the P2likevirus major tail tube protein family.

The protein resides in the virion. Functionally, forms the virus tail tube. In Escherichia phage P2 (Bacteriophage P2), this protein is Tail tube protein (FII).